Here is a 533-residue protein sequence, read N- to C-terminus: MAIRINNINLSLDDDLNVLEKKICKKLNMSKEDISRLDIIKRSIDARKKNDIKVSFSVNVFCKKEKMLLSRIHDKDISFEEIREIESIKSGTEEIKARPVVVGFGPAGIFAALTLARYGYKPIVYERGEDVDKRTETVEKFWKDGRLNLESNVQFGEGGAGAFSDGKLTTRIKDHRCSFVLDELIKAGAPAEIKYESKAHVGTDLLKGVVKNIREEIKRLGGEVNFNSKLEKITYKDGKLESIVVNGKNITCEALVLAIGHSSRDTYEMLYRENVSMDAKAFAIGVRIEHPQELINVNQYGNNHNHPKLHAADYRLTYQSEKLKRGVYSFCMCPGGVVVAAASEEGRLVSNGMSYHARDLDNANSALVVTVSPEDFKGSSPLRGMEFQRHYESLAFKLGGGNYKAPVQLVGDFMKDRVSTKLGEVIPSYTAGYEFRELKECLPDYVVEALKEGIINFDKKIKGYAREDAILTGIETRTSAPVRLNRNASLESINVCGLYPTGEGAGFAGGIISAAVDGIKVAEHIIEKFDLPK.

This is an uncharacterized protein from Clostridium beijerinckii (strain ATCC 51743 / NCIMB 8052) (Clostridium acetobutylicum).